We begin with the raw amino-acid sequence, 395 residues long: MHC class I-like protein MILL1 (395 aa).

Positions 1–32 (MLLSRNLRALAAIHLWIVYLLLEDLLGTCAEG) are cleaved as a signal peptide. Positions 57-148 (AVAEPHTLRY…ITAQNGQNTD (92 aa)) are alpha-1. 3 N-linked (GlcNAc...) asparagine glycosylation sites follow: Asn98, Asn163, and Asn199. Residues 149–240 (LHILQATFGC…SLRNGLLNTG (92 aa)) are alpha-2. 2 disulfide bridges follow: Cys158-Cys221 and Cys260-Cys317. An alpha-3 region spans residues 241-337 (FPKVIVTFRN…EPAATEAPVY (97 aa)). One can recognise an Ig-like C1-type domain in the interval 242–333 (PKVIVTFRNY…HNINEPAATE (92 aa)). Residues 332–352 (TEAPVYGARREQPPTSGVGSR) form a disordered region. The interval 338–368 (GARREQPPTSGVGSRVGKSLWSAMTTALVVI) is connecting peptide. Residue Ser369 is the site of GPI-anchor amidated serine attachment. Residues 370-395 (WTLSQKLMGPLLWFCSGGFCSFLQCW) constitute a propeptide, removed in mature form.

It belongs to the MHC class I family. Heterodimer with B2M. Post-translationally, N-glycosylated. As to expression, expressed in stomach, intestine, uterus, skeletal muscle and heart.

The protein resides in the cell membrane. This chain is MHC class I-like protein MILL1, found in Mus musculus (Mouse).